Reading from the N-terminus, the 420-residue chain is 4-hydroxy-3-methylbut-2-en-1-yl diphosphate synthase (flavodoxin) (420 aa).

[4Fe-4S] cluster is bound by residues C307, C310, C353, and E360.

Belongs to the IspG family. It depends on [4Fe-4S] cluster as a cofactor.

The catalysed reaction is (2E)-4-hydroxy-3-methylbut-2-enyl diphosphate + oxidized [flavodoxin] + H2O + 2 H(+) = 2-C-methyl-D-erythritol 2,4-cyclic diphosphate + reduced [flavodoxin]. It functions in the pathway isoprenoid biosynthesis; isopentenyl diphosphate biosynthesis via DXP pathway; isopentenyl diphosphate from 1-deoxy-D-xylulose 5-phosphate: step 5/6. Its function is as follows. Converts 2C-methyl-D-erythritol 2,4-cyclodiphosphate (ME-2,4cPP) into 1-hydroxy-2-methyl-2-(E)-butenyl 4-diphosphate. This chain is 4-hydroxy-3-methylbut-2-en-1-yl diphosphate synthase (flavodoxin), found in Brucella suis biovar 1 (strain 1330).